The chain runs to 351 residues: Photosystem II D2 protein (351 aa).

A helical membrane pass occupies residues 39–59 (TAYLAAGGWMTGTTFVTSWYT). A chlorophyll a-binding site is contributed by H116. The helical transmembrane segment at 123–139 (GFCLRQFEIARLVGIRP) threads the bilayer. Pheophytin a contacts are provided by Q128 and N141. The helical transmembrane segment at 151-164 (VFVSVFLLYPLGQA) threads the bilayer. H196 provides a ligand contact to chlorophyll a. A helical transmembrane segment spans residues 206–226 (GALLCAIHGATVENTLFEDGD). 2 residues coordinate a plastoquinone: H213 and F260. H213 contacts Fe cation. H267 contacts Fe cation. Residues 277 to 293 (GLWTSAIGIVGLALNLR) form a helical membrane-spanning segment.

This sequence belongs to the reaction center PufL/M/PsbA/D family. As to quaternary structure, PSII is composed of 1 copy each of membrane proteins PsbA, PsbB, PsbC, PsbD, PsbE, PsbF, PsbH, PsbI, PsbJ, PsbK, PsbL, PsbM, PsbT, PsbX, PsbY, PsbZ, Psb30/Ycf12, at least 3 peripheral proteins of the oxygen-evolving complex and a large number of cofactors. It forms dimeric complexes. The D1/D2 heterodimer binds P680, chlorophylls that are the primary electron donor of PSII, and subsequent electron acceptors. It shares a non-heme iron and each subunit binds pheophytin, quinone, additional chlorophylls, carotenoids and lipids. There is also a Cl(-1) ion associated with D1 and D2, which is required for oxygen evolution. The PSII complex binds additional chlorophylls, carotenoids and specific lipids. serves as cofactor.

It localises to the plastid. The protein localises to the chloroplast thylakoid membrane. It catalyses the reaction 2 a plastoquinone + 4 hnu + 2 H2O = 2 a plastoquinol + O2. Photosystem II (PSII) is a light-driven water:plastoquinone oxidoreductase that uses light energy to abstract electrons from H(2)O, generating O(2) and a proton gradient subsequently used for ATP formation. It consists of a core antenna complex that captures photons, and an electron transfer chain that converts photonic excitation into a charge separation. The D1/D2 (PsbA/PsbD) reaction center heterodimer binds P680, the primary electron donor of PSII as well as several subsequent electron acceptors. D2 is needed for assembly of a stable PSII complex. This is Photosystem II D2 protein from Trieres chinensis (Marine centric diatom).